We begin with the raw amino-acid sequence, 173 residues long: ADP-ribosylation factor-like protein 11 (173 aa).

A lipid anchor (N-myristoyl glycine) is attached at G2. Residues 17 to 24 (GLDCAGKT), 61 to 65 (DIGGQ), and 120 to 123 (NKQE) each bind GTP.

This sequence belongs to the small GTPase superfamily. Arf family.

In terms of biological role, may play a role in apoptosis. May act as a tumor suppressor. The sequence is that of ADP-ribosylation factor-like protein 11 (Arl11) from Rattus norvegicus (Rat).